The following is a 104-amino-acid chain: Large ribosomal subunit protein uL24 (104 aa).

The protein belongs to the universal ribosomal protein uL24 family. As to quaternary structure, part of the 50S ribosomal subunit.

One of two assembly initiator proteins, it binds directly to the 5'-end of the 23S rRNA, where it nucleates assembly of the 50S subunit. Its function is as follows. One of the proteins that surrounds the polypeptide exit tunnel on the outside of the subunit. This chain is Large ribosomal subunit protein uL24, found in Corynebacterium kroppenstedtii (strain DSM 44385 / JCM 11950 / CIP 105744 / CCUG 35717).